Consider the following 249-residue polypeptide: 3alpha-hydroxy bile acid-CoA-ester 3-dehydrogenase 1/3 (249 aa).

Residues 15–18 (TRGI), Glu-38, Glu-42, and Asn-92 contribute to the NAD(+) site. Substrate is bound at residue Ser-144. Active-site proton donor/acceptor residues include Tyr-157 and Lys-161. NAD(+) contacts are provided by residues Lys-161 and 190-192 (VDT).

It belongs to the short-chain dehydrogenases/reductases (SDR) family. Homotetramer.

The enzyme catalyses a 3alpha-hydroxy bile acid CoA + NAD(+) = a 3-oxo bile acid CoA + NADH + H(+). The catalysed reaction is choloyl-CoA + NAD(+) = 7alpha,12alpha-dihydroxy-3-oxochol-24-oyl-CoA + NADH + H(+). It catalyses the reaction chenodeoxycholoyl-CoA + NAD(+) = 7alpha-hydroxy-3-oxochol-24-oyl-CoA + NADH + H(+). It carries out the reaction deoxycholoyl-CoA + NAD(+) = 12alpha-hydroxy-3-oxocholan-24-oyl-CoA + NADH + H(+). The enzyme catalyses lithocholoyl-CoA + NAD(+) = 3-oxocholan-24-oyl-CoA + NADH + H(+). Its pathway is lipid metabolism; bile acid biosynthesis. Functionally, involved in the multi-step bile acid 7alpha-dehydroxylation pathway that transforms primary bile acids to secondary bile acids in the human gut. Catalyzes the oxidation of C3-hydroxyl group of CoA conjugated bile acids generating a C3-oxo bile acid intermediate. Can use choloyl-CoA, chenodeoxycholoyl-CoA, deoxycholoyl-CoA, and lithocholoyl-CoA as substrates with similar efficiency. Highly prefers NAD over NADP as cosubstrate. Also catalyzes the reverse reactions; in vitro, the preferred direction of reaction depends on the pH. Has very little activity with unconjugated (non-CoA) bile acid substrates. The protein is 3alpha-hydroxy bile acid-CoA-ester 3-dehydrogenase 1/3 (baiA1) of Clostridium scindens (strain JCM 10418 / VPI 12708).